Here is a 377-residue protein sequence, read N- to C-terminus: Chaperone protein DnaJ (377 aa).

The 65-residue stretch at 5-69 (EYYDRLGVSK…QKRAAYDQYG (65 aa)) folds into the J domain. The CR-type zinc-finger motif lies at 133 to 215 (GTEKEVHYNR…CHGTGHEKQS (83 aa)). Zn(2+)-binding residues include C146, C149, C163, C166, C189, C192, C203, and C206. CXXCXGXG motif repeat units lie at residues 146-153 (CHTCNGSG), 163-170 (CSKCHGSG), 189-196 (CDVCHGTG), and 203-210 (CPTCHGTG).

This sequence belongs to the DnaJ family. As to quaternary structure, homodimer. It depends on Zn(2+) as a cofactor.

It localises to the cytoplasm. Its function is as follows. Participates actively in the response to hyperosmotic and heat shock by preventing the aggregation of stress-denatured proteins and by disaggregating proteins, also in an autonomous, DnaK-independent fashion. Unfolded proteins bind initially to DnaJ; upon interaction with the DnaJ-bound protein, DnaK hydrolyzes its bound ATP, resulting in the formation of a stable complex. GrpE releases ADP from DnaK; ATP binding to DnaK triggers the release of the substrate protein, thus completing the reaction cycle. Several rounds of ATP-dependent interactions between DnaJ, DnaK and GrpE are required for fully efficient folding. Also involved, together with DnaK and GrpE, in the DNA replication of plasmids through activation of initiation proteins. The polypeptide is Chaperone protein DnaJ (Streptococcus mutans serotype c (strain ATCC 700610 / UA159)).